Consider the following 445-residue polypeptide: Maltoporin 2 (445 aa).

The signal sequence occupies residues 1-25; the sequence is MKMKAKWLPIAAAVTAALASQAAFA.

The protein belongs to the porin LamB (TC 1.B.3) family. As to quaternary structure, homotrimer formed of three 18-stranded antiparallel beta-barrels, containing three independent channels.

The protein localises to the cell outer membrane. The catalysed reaction is beta-maltose(in) = beta-maltose(out). Involved in the transport of maltose and maltodextrins. In Aeromonas salmonicida (strain A449), this protein is Maltoporin 2.